Consider the following 512-residue polypeptide: Bifunctional purine biosynthesis protein PurH (512 aa).

The MGS-like domain maps to methionine 1 to valine 150.

The protein belongs to the PurH family.

It carries out the reaction (6R)-10-formyltetrahydrofolate + 5-amino-1-(5-phospho-beta-D-ribosyl)imidazole-4-carboxamide = 5-formamido-1-(5-phospho-D-ribosyl)imidazole-4-carboxamide + (6S)-5,6,7,8-tetrahydrofolate. The catalysed reaction is IMP + H2O = 5-formamido-1-(5-phospho-D-ribosyl)imidazole-4-carboxamide. The protein operates within purine metabolism; IMP biosynthesis via de novo pathway; 5-formamido-1-(5-phospho-D-ribosyl)imidazole-4-carboxamide from 5-amino-1-(5-phospho-D-ribosyl)imidazole-4-carboxamide (10-formyl THF route): step 1/1. It participates in purine metabolism; IMP biosynthesis via de novo pathway; IMP from 5-formamido-1-(5-phospho-D-ribosyl)imidazole-4-carboxamide: step 1/1. This chain is Bifunctional purine biosynthesis protein PurH, found in Chloroflexus aurantiacus (strain ATCC 29366 / DSM 635 / J-10-fl).